The primary structure comprises 146 residues: Flagellar assembly factor FliW (146 aa).

This sequence belongs to the FliW family. As to quaternary structure, interacts with translational regulator CsrA and flagellin(s).

The protein localises to the cytoplasm. Its function is as follows. Acts as an anti-CsrA protein, binds CsrA and prevents it from repressing translation of its target genes, one of which is flagellin. Binds to flagellin and participates in the assembly of the flagellum. This is Flagellar assembly factor FliW from Azoarcus sp. (strain BH72).